An 829-amino-acid polypeptide reads, in one-letter code: Leucine--tRNA ligase (829 aa).

The 'HIGH' region signature appears at 40-51; that stretch reads PYPSGAGLHVGH. The 'KMSKS' region motif lies at 609–613; sequence KMSKS. Residue K612 coordinates ATP.

Belongs to the class-I aminoacyl-tRNA synthetase family.

Its subcellular location is the cytoplasm. It carries out the reaction tRNA(Leu) + L-leucine + ATP = L-leucyl-tRNA(Leu) + AMP + diphosphate. The sequence is that of Leucine--tRNA ligase from Lactococcus lactis subsp. lactis (strain IL1403) (Streptococcus lactis).